The primary structure comprises 201 residues: Recombination protein RecR (201 aa).

A C4-type zinc finger spans residues 60–75 (CSCCGNVDTSDPCTIC). The Toprim domain maps to 83–178 (ATLIVVEDVS…RVTRLAHGVP (96 aa)).

The protein belongs to the RecR family.

In terms of biological role, may play a role in DNA repair. It seems to be involved in an RecBC-independent recombinational process of DNA repair. It may act with RecF and RecO. This is Recombination protein RecR from Brucella melitensis biotype 1 (strain ATCC 23456 / CCUG 17765 / NCTC 10094 / 16M).